The sequence spans 68 residues: Conotoxin tx3b (68 aa).

A signal peptide spans 1–19; that stretch reads MSKLGALLTICLLLFSLTA. The propeptide occupies 20-52; it reads VPLDGDQHADQPAQRLQDRIPTEDHPLFDPNKR. Cystine bridges form between Cys-53–Cys-67, Cys-54–Cys-63, and Cys-59–Cys-66. Met-61 carries the methionine sulfoxide; partial modification. Cysteine amide is present on Cys-67.

Expressed by the venom duct.

It localises to the secreted. Functionally, intracranial injection into mice causes scratching, hyperactivity and circular motion. This is Conotoxin tx3b from Conus textile (Cloth-of-gold cone).